Here is an 80-residue protein sequence, read N- to C-terminus: Sec-independent protein translocase protein TatA (80 aa).

Residues Met1–Thr21 traverse the membrane as a helical segment. The segment at Lys39–Ser80 is disordered. The segment covering Ser67–Ser80 has biased composition (basic and acidic residues).

It belongs to the TatA/E family. In terms of assembly, the Tat system comprises two distinct complexes: a TatABC complex, containing multiple copies of TatA, TatB and TatC subunits, and a separate TatA complex, containing only TatA subunits. Substrates initially bind to the TatABC complex, which probably triggers association of the separate TatA complex to form the active translocon.

The protein resides in the cell inner membrane. Its function is as follows. Part of the twin-arginine translocation (Tat) system that transports large folded proteins containing a characteristic twin-arginine motif in their signal peptide across membranes. TatA could form the protein-conducting channel of the Tat system. The polypeptide is Sec-independent protein translocase protein TatA (Hahella chejuensis (strain KCTC 2396)).